A 230-amino-acid polypeptide reads, in one-letter code: 5'-methylthioadenosine/S-adenosylhomocysteine nucleosidase (230 aa).

The Proton acceptor role is filled by E12. Substrate contacts are provided by residues G78, M153, and 174 to 175; that span reads ME. Catalysis depends on D198, which acts as the Proton donor.

Belongs to the PNP/UDP phosphorylase family. MtnN subfamily.

It carries out the reaction S-adenosyl-L-homocysteine + H2O = S-(5-deoxy-D-ribos-5-yl)-L-homocysteine + adenine. The catalysed reaction is S-methyl-5'-thioadenosine + H2O = 5-(methylsulfanyl)-D-ribose + adenine. It catalyses the reaction 5'-deoxyadenosine + H2O = 5-deoxy-D-ribose + adenine. It participates in amino-acid biosynthesis; L-methionine biosynthesis via salvage pathway; S-methyl-5-thio-alpha-D-ribose 1-phosphate from S-methyl-5'-thioadenosine (hydrolase route): step 1/2. Catalyzes the irreversible cleavage of the glycosidic bond in both 5'-methylthioadenosine (MTA) and S-adenosylhomocysteine (SAH/AdoHcy) to adenine and the corresponding thioribose, 5'-methylthioribose and S-ribosylhomocysteine, respectively. Also cleaves 5'-deoxyadenosine, a toxic by-product of radical S-adenosylmethionine (SAM) enzymes, into 5-deoxyribose and adenine. This is 5'-methylthioadenosine/S-adenosylhomocysteine nucleosidase from Lysinibacillus sphaericus (strain C3-41).